The primary structure comprises 268 residues: Small ribosomal subunit protein eS1 (268 aa).

A disordered region spans residues 1-21; that stretch reads MAVGKNKGLSKGGKKGGKKKV.

The protein belongs to the eukaryotic ribosomal protein eS1 family. In terms of assembly, component of the small ribosomal subunit. Mature ribosomes consist of a small (40S) and a large (60S) subunit. The 40S subunit contains about 33 different proteins and 1 molecule of RNA (18S). The 60S subunit contains about 49 different proteins and 3 molecules of RNA (28S, 5.8S and 5S).

The protein localises to the cytoplasm. Essential for oogenesis; required for late follicle cell development. The sequence is that of Small ribosomal subunit protein eS1 from Drosophila persimilis (Fruit fly).